The sequence spans 258 residues: Tryptophan synthase alpha chain (258 aa).

Residues E52 and D63 each act as proton acceptor in the active site.

The protein belongs to the TrpA family. In terms of assembly, tetramer of two alpha and two beta chains.

It catalyses the reaction (1S,2R)-1-C-(indol-3-yl)glycerol 3-phosphate + L-serine = D-glyceraldehyde 3-phosphate + L-tryptophan + H2O. It participates in amino-acid biosynthesis; L-tryptophan biosynthesis; L-tryptophan from chorismate: step 5/5. The alpha subunit is responsible for the aldol cleavage of indoleglycerol phosphate to indole and glyceraldehyde 3-phosphate. This Streptococcus pneumoniae (strain ATCC 700669 / Spain 23F-1) protein is Tryptophan synthase alpha chain.